Consider the following 991-residue polypeptide: Antigenic heat-stable 120 kDa protein (991 aa).

Disordered regions lie at residues 1 to 37 (DTSE…TPAL), 54 to 73 (TPSM…TSDP), and 348 to 384 (GQSK…TNQP). The span at 12-29 (EYTEEQKQTEEQEQKEFL) shows a compositional bias: basic and acidic residues. Residues 348-373 (GQSKEQPLITPQQTTSSSVEPPQYKQ) are compositionally biased toward polar residues.

Its subcellular location is the cytoplasm. In Rickettsia sibirica, this protein is Antigenic heat-stable 120 kDa protein (sca4).